A 647-amino-acid polypeptide reads, in one-letter code: Chaperone protein DnaK (647 aa).

At threonine 199 the chain carries Phosphothreonine; by autocatalysis. The interval 602–647 (MYAQEQAQAGQQAGPGAGSASAGQSGEKPVEGEVVDAEFEEVKDKK) is disordered. Low complexity predominate over residues 604-627 (AQEQAQAGQQAGPGAGSASAGQSG).

Belongs to the heat shock protein 70 family.

Functionally, acts as a chaperone. This Nitrosomonas eutropha (strain DSM 101675 / C91 / Nm57) protein is Chaperone protein DnaK.